We begin with the raw amino-acid sequence, 629 residues long: Tudor and KH domain-containing protein homolog (629 aa).

A helical transmembrane segment spans residues 9 to 29; it reads LPIALGLSLVTVTAFVAYYVL. KH domains follow at residues 46–109 and 119–185; these read INTI…ETLI and IMSE…KKLV. The interval 198 to 240 is disordered; that stretch reads IEQSKRPPRHSSSPPSPCPSPGDRDADADAQGDVDHTRVKYKR. A compositionally biased stretch (basic and acidic residues) spans 219–240; the sequence is GDRDADADAQGDVDHTRVKYKR. In terms of domain architecture, Tudor spans 297–362; that stretch reads HVSVGQVVAA…CELRADLLRL (66 aa). The disordered stretch occupies residues 464 to 526; it reads PAPSPRPSPP…GDDSKDKDGI (63 aa).

Belongs to the Tdrkh family. In terms of assembly, interacts with (symmetrically methylated) Siwi. Interacts with (symmetrically methylated) Ago3. Interacts with PNLDC1/trimmer; interaction takes place on the mitochondrial surface and recruits PNLDC1/trimmer to Siwi-bound pre-piRNAs.

It localises to the mitochondrion outer membrane. Functionally, participates in the primary piRNA biogenesis pathway and is required during spermatogenesis to repress transposable elements and prevent their mobilization, which is essential for the germline integrity. The piRNA metabolic process mediates the repression of transposable elements during meiosis by forming complexes composed of piRNAs and Piwi proteins (Siwi or Ago3) and govern the methylation and subsequent repression of transposons. Required for the final steps of primary piRNA biogenesis by participating in the processing of 31-37 nt intermediates into mature piRNAs: acts by recruiting the exonuclease PNLDC1/trimmer to Siwi-bound pre-piRNAs. The protein is Tudor and KH domain-containing protein homolog of Bombyx mori (Silk moth).